We begin with the raw amino-acid sequence, 287 residues long: Shikimate dehydrogenase (NADP(+)) (287 aa).

Shikimate-binding positions include 20 to 22 (SRS) and Thr67. The active-site Proton acceptor is Lys71. Glu84 contributes to the NADP(+) binding site. Positions 93 and 108 each coordinate shikimate. NADP(+) contacts are provided by residues 132–136 (GAGGA) and Met226. Residue Tyr228 coordinates shikimate. Position 250 (Gly250) interacts with NADP(+).

This sequence belongs to the shikimate dehydrogenase family. In terms of assembly, homodimer.

The catalysed reaction is shikimate + NADP(+) = 3-dehydroshikimate + NADPH + H(+). It participates in metabolic intermediate biosynthesis; chorismate biosynthesis; chorismate from D-erythrose 4-phosphate and phosphoenolpyruvate: step 4/7. Functionally, involved in the biosynthesis of the chorismate, which leads to the biosynthesis of aromatic amino acids. Catalyzes the reversible NADPH linked reduction of 3-dehydroshikimate (DHSA) to yield shikimate (SA). This chain is Shikimate dehydrogenase (NADP(+)), found in Bordetella petrii (strain ATCC BAA-461 / DSM 12804 / CCUG 43448).